The chain runs to 148 residues: Hydrogenase expression/formation protein HoxO (148 aa).

The segment at 128–148 is disordered; it reads IPVLSPESGTPSCSPMETSES. The span at 134 to 148 shows a compositional bias: polar residues; sequence ESGTPSCSPMETSES.

The protein belongs to the HupG/HyaE family.

The polypeptide is Hydrogenase expression/formation protein HoxO (hoxO) (Azotobacter vinelandii).